A 156-amino-acid polypeptide reads, in one-letter code: MSRRKSAVKRTILPDARYDSQTVSKFINSLMIQGKKSTAEGIFYGAMDIVEAKTSQPGVGVFKQALNNLKPVVEVKSRRVGGATYQVPVEVRQDRRTALAMRWLISYSRDRNEKSMKEKLAAEVLAASRGEGNAVKKKEDTHRMAEANKAFAHYRW.

It belongs to the universal ribosomal protein uS7 family. Part of the 30S ribosomal subunit. Contacts proteins S9 and S11.

Functionally, one of the primary rRNA binding proteins, it binds directly to 16S rRNA where it nucleates assembly of the head domain of the 30S subunit. Is located at the subunit interface close to the decoding center, probably blocks exit of the E-site tRNA. This chain is Small ribosomal subunit protein uS7, found in Gemmatimonas aurantiaca (strain DSM 14586 / JCM 11422 / NBRC 100505 / T-27).